We begin with the raw amino-acid sequence, 157 residues long: Small ribosomal subunit protein uS7c (157 aa).

The protein belongs to the universal ribosomal protein uS7 family. In terms of assembly, part of the 30S ribosomal subunit.

It is found in the plastid. It localises to the organellar chromatophore. Functionally, one of the primary rRNA binding proteins, it binds directly to 16S rRNA where it nucleates assembly of the head domain of the 30S subunit. This is Small ribosomal subunit protein uS7c (rps7) from Paulinella chromatophora.